Reading from the N-terminus, the 258-residue chain is Spindlin-3 (258 aa).

Residues 1–23 (MKTPFGKAAAGQRSRTGAGHGSV) form a disordered region. Tudor-like domain stretches follow at residues 50–99 (VGCR…LELH), 129–178 (VGKA…YQLL), and 210–255 (VGKQ…YDLV). Histone H3K4me3 and H3R8me2a binding stretches follow at residues Glu138 and 246–248 (DFH).

Belongs to the SPIN/STSY family. Interacts with C11orf84/SPINDOC.

Its function is as follows. Exhibits H3K4me3-binding activity. The protein is Spindlin-3 (SPIN3) of Pongo abelii (Sumatran orangutan).